The chain runs to 224 residues: MSIRSWPAAERPRERLLELGAGSLSDAELLAIFLRTGVAGKSAVDLARHLLNQFDGLRSLLDADLSTFTSQLGLGPAKFAQLQAVMEMARRHMAESLRRDSALENPTQVRNYLKAQLRHEQHEVFACLFLDNKHRVMTFEILFRGTINASYVHPRQVVKRAMAHNAASLILCHNHPSGITTPSRSDIDLTKRLKEALMLVDVHVLDHVIVGDGEPLSMVERGLM.

The MPN domain maps to 102 to 224; that stretch reads ALENPTQVRN…PLSMVERGLM (123 aa). Residues H173, H175, and D186 each contribute to the Zn(2+) site. The JAMM motif signature appears at 173–186; sequence HNHPSGITTPSRSD.

It belongs to the UPF0758 family.

The protein is UPF0758 protein PSPPH_0210 of Pseudomonas savastanoi pv. phaseolicola (strain 1448A / Race 6) (Pseudomonas syringae pv. phaseolicola (strain 1448A / Race 6)).